The chain runs to 146 residues: Lysozyme C-2 (146 aa).

A signal peptide spans 1–18; sequence MKTLLVLALLLLSVSVQA. Residues 19–146 form the C-type lysozyme domain; that stretch reads KVYDRCEFAR…VSQYIRGCKL (128 aa). Intrachain disulfides connect Cys24–Cys144, Cys48–Cys132, Cys81–Cys97, and Cys93–Cys111. Residues Glu53 and Asp69 contribute to the active site.

The protein belongs to the glycosyl hydrolase 22 family. In terms of assembly, monomer.

It localises to the secreted. The enzyme catalyses Hydrolysis of (1-&gt;4)-beta-linkages between N-acetylmuramic acid and N-acetyl-D-glucosamine residues in a peptidoglycan and between N-acetyl-D-glucosamine residues in chitodextrins.. Its function is as follows. Lysozymes have primarily a bacteriolytic function; those in tissues and body fluids are associated with the monocyte-macrophage system and enhance the activity of immunoagents. This Sus scrofa (Pig) protein is Lysozyme C-2.